The chain runs to 396 residues: Probable sugar efflux transporter (396 aa).

A run of 12 helical transmembrane segments spans residues 15–35, 50–70, 81–101, 103–123, 136–156, 170–190, 209–229, 246–266, 275–295, 299–319, 333–353, and 364–384; these read VVTL…PVGL, VGIM…PFML, LICL…SWSF, VLVI…SITA, AQAL…GLPL, FFAI…LLPL, PALM…YTAY, FATA…VIFG, ALVS…LPAA, IHLG…GLGM, VAMA…ALVG, and MIGY…IIIF.

The protein belongs to the major facilitator superfamily. SotB (TC 2.A.1.2) family.

It localises to the cell inner membrane. Involved in the efflux of sugars. The physiological role may be the reduction of the intracellular concentration of toxic sugars or sugar metabolites. In Escherichia coli O127:H6 (strain E2348/69 / EPEC), this protein is Probable sugar efflux transporter.